A 107-amino-acid chain; its full sequence is uncharacterized protein (107 aa).

Positions 86–107 (KRAETARLPAATPQKRTGPARG) are disordered.

This is an uncharacterized protein from Saccharomyces cerevisiae (strain ATCC 204508 / S288c) (Baker's yeast).